Reading from the N-terminus, the 105-residue chain is MDKFYNYNSSSNQALLNLKVKPDSKQNLISDFVIINNLPYLKLFIKTAPEQGKANEEIINYLAKAWKLSRSNIEIIKGHTHSLKTILIKNIDEDYLNSIINSYIK.

The protein belongs to the UPF0235 family.

The protein is UPF0235 protein A1E_05380 of Rickettsia canadensis (strain McKiel).